A 251-amino-acid polypeptide reads, in one-letter code: Pyrroloquinoline-quinone synthase (251 aa).

The protein belongs to the PqqC family.

The catalysed reaction is 6-(2-amino-2-carboxyethyl)-7,8-dioxo-1,2,3,4,7,8-hexahydroquinoline-2,4-dicarboxylate + 3 O2 = pyrroloquinoline quinone + 2 H2O2 + 2 H2O + H(+). It participates in cofactor biosynthesis; pyrroloquinoline quinone biosynthesis. In terms of biological role, ring cyclization and eight-electron oxidation of 3a-(2-amino-2-carboxyethyl)-4,5-dioxo-4,5,6,7,8,9-hexahydroquinoline-7,9-dicarboxylic-acid to PQQ. The chain is Pyrroloquinoline-quinone synthase from Pseudomonas putida (strain ATCC 47054 / DSM 6125 / CFBP 8728 / NCIMB 11950 / KT2440).